Reading from the N-terminus, the 1071-residue chain is Exportin-1 (1071 aa).

An Importin N-terminal domain is found at 46–112 (AQEVLTHLKE…KKYVVGLIIK (67 aa)). HEAT repeat units lie at residues 217 to 240 (QNAPLVHATLETLLRFLNWIPLGY), 241 to 277 (IFETKLISTLIYKFLNVPMFRNVSLKCLTEIAGVSVS), 354 to 472 (MLLV…YVDT), 515 to 553 (RFLVTVIKDLLGLCEQKRGKDNKAIIASNIMYIVGQYPR), 560 to 597 (KFLKTVVNKLFEFMHETHDGVQDMACDTFIKIAQKCRR), and 602 to 639 (VQVGEVMPFIDEILNNINTIICDLQPQQVHTFYEAVGY). The interval 327 to 450 (CTFLKEHGQL…VREFMKDTDS (124 aa)) is necessary for interaction with Ran and nuclear export complex formation. S391 is subject to Phosphoserine. The interval 411–481 (TVLSKVRLLM…TEIIMTKKLQ (71 aa)) is necessary for interaction with RANBP3. An N6-acetyllysine modification is found at K446. T448 is modified (phosphothreonine). Phosphoserine is present on S450. The residue at position 454 (Y454) is a Phosphotyrosine. K693 bears the N6-acetyllysine mark. HEAT repeat units follow at residues 775–813 (NFVPPLLDAVLIDYQRNVPAAREPEVLSTMAIIVNKLGG), 885–916 (TMRNVADTGLQILFTLLQNVAQEEAAAQSFYQ), and 917–954 (TYFCDILQHIFSVVTDTSHTAGLTMHASILAYMFNLVE). A phosphoserine mark is found at S966 and S1031. Residues 1002-1039 (FSLNQDIPAFKEHLRDFLVQIKEFAGEDTSDLFLEERE) form an HEAT 10 repeat.

It belongs to the exportin family. As to quaternary structure, found in a U snRNA export complex with PHAX/RNUXA, NCBP1/CBP80, NCBP2/CBP20, RAN, XPO1 and m7G-capped RNA. Component of a nuclear export receptor complex composed of KPNB1, RAN, SNUPN and XPO1. Found in a trimeric export complex with SNUPN, RAN and XPO1. Found in a nuclear export complex with RANBP3 and RAN. Found in a 60S ribosomal subunit export complex with NMD3, RAN, XPO1. Interacts with DDX3X, NMD3, NUP42, NUP88, NUP214, RANBP3 and TERT. Interacts with NEMF (via its N-terminus). Interacts with the monomeric form of BIRC5/survivin deacetylated at 'Lys-129'. Interacts with DTNBP1 and SERTAD2; the interactions translocate DTNBP1 and SERTAD2 out of the nucleus. Interacts with ATF2. Interacts with SLC35G1 and STIM1. Interacts with DCAF8. Interacts with CPEB3. Interacts with HAX1. Interacts with BOK; translocates to the cytoplasm. Interacts with HSP90AB1. Interacts with LRPPRC; interacts with LRPPRC alone and also when LRPPRC is in complex with EIF4E and with EIF4E sensitivity element (4ESE)-containing mRNAs to form an EIF4E-dependent mRNA export complex.

The protein localises to the cytoplasm. It is found in the nucleus. The protein resides in the nucleoplasm. It localises to the cajal body. Its subcellular location is the nucleolus. In terms of biological role, mediates the nuclear export of cellular proteins (cargos) bearing a leucine-rich nuclear export signal (NES) and of RNAs. In the nucleus, in association with RANBP3, binds cooperatively to the NES on its target protein and to the GTPase Ran in its active GTP-bound form. Docking of this complex to the nuclear pore complex (NPC) is mediated through binding to nucleoporins. Upon transit of a nuclear export complex into the cytoplasm, disassembling of the complex and hydrolysis of Ran-GTP to Ran-GDP (induced by RANBP1 and RANGAP1, respectively) cause release of the cargo from the export receptor. The directionality of nuclear export is thought to be conferred by an asymmetric distribution of the GTP- and GDP-bound forms of Ran between the cytoplasm and nucleus. Involved in U3 snoRNA transport from Cajal bodies to nucleoli. Binds to late precursor U3 snoRNA bearing a TMG cap. The protein is Exportin-1 (Xpo1) of Rattus norvegicus (Rat).